The chain runs to 117 residues: uncharacterized protein (117 aa).

The helical transmembrane segment at 1 to 21 (MEIAIIALFIVSIALIAFSYS) threads the bilayer. A coiled-coil region spans residues 38–67 (LSAMQEIYKLKKKMTVLEEELLETNLVIRK).

The protein resides in the cell membrane. This is an uncharacterized protein from Bacillus subtilis (strain 168).